The chain runs to 519 residues: Probable pectinesterase/pectinesterase inhibitor 36 (519 aa).

An N-terminal signal peptide occupies residues 1–25 (MSTFVKVTDLITIMFFLAIAAVITA). Residues 27-141 (NTAELDVLEM…TFVLHEALAF (115 aa)) form a pectinesterase inhibitor 36 region. 2 N-linked (GlcNAc...) asparagine glycosylation sites follow: Asn92 and Asn130. Residues 147-196 (GHMKKRLHGPARQGHGPTRPKHRPTRPNHGPGRSHHGPSRPNQNGGMLVS) form a disordered region. Residues 164–184 (TRPKHRPTRPNHGPGRSHHGP) show a composition bias toward basic residues. Polar residues predominate over residues 186–196 (RPNQNGGMLVS). The segment at 205 to 505 (DFVVARDGSA…FTVSRFIQGD (301 aa)) is pectinesterase 36. Positions 283 and 313 each coordinate substrate. Catalysis depends on Asp336, which acts as the Proton donor; for pectinesterase activity. Residue Asp357 is the Nucleophile; for pectinesterase activity of the active site. Substrate contacts are provided by Arg425 and Trp427.

This sequence in the N-terminal section; belongs to the PMEI family. The protein in the C-terminal section; belongs to the pectinesterase family. In terms of tissue distribution, expressed in siliques.

The protein resides in the secreted. Its subcellular location is the cell wall. The enzyme catalyses [(1-&gt;4)-alpha-D-galacturonosyl methyl ester](n) + n H2O = [(1-&gt;4)-alpha-D-galacturonosyl](n) + n methanol + n H(+). Its pathway is glycan metabolism; pectin degradation; 2-dehydro-3-deoxy-D-gluconate from pectin: step 1/5. Acts in the modification of cell walls via demethylesterification of cell wall pectin. The protein is Probable pectinesterase/pectinesterase inhibitor 36 (PME36) of Arabidopsis thaliana (Mouse-ear cress).